Reading from the N-terminus, the 201-residue chain is Small ribosomal subunit protein uS4c (201 aa).

The disordered stretch occupies residues glycine 20–glutamine 43. The S4 RNA-binding domain maps to methionine 89–glutamine 149.

It belongs to the universal ribosomal protein uS4 family. Part of the 30S ribosomal subunit. Contacts protein S5. The interaction surface between S4 and S5 is involved in control of translational fidelity.

It is found in the plastid. Its subcellular location is the chloroplast. One of the primary rRNA binding proteins, it binds directly to 16S rRNA where it nucleates assembly of the body of the 30S subunit. Functionally, with S5 and S12 plays an important role in translational accuracy. The protein is Small ribosomal subunit protein uS4c (rps4) of Vitis vinifera (Grape).